A 266-amino-acid chain; its full sequence is 15-hydroxyprostaglandin dehydrogenase [NAD(+)] (266 aa).

NAD(+) is bound by residues 12 to 20, 36 to 37, 63 to 65, and Asn91; these read GAAQGIGKA, DW, and CDV. Substrate is bound by residues Ser138 and Gln148. Catalysis depends on Tyr151, which acts as the Proton acceptor. NAD(+) is bound by residues 151–155 and 186–188; these read YCASK and VKT.

Belongs to the short-chain dehydrogenases/reductases (SDR) family. In terms of assembly, homodimer.

The protein localises to the cytoplasm. The enzyme catalyses prostaglandin E2 + NAD(+) = 15-oxoprostaglandin E2 + NADH + H(+). It catalyses the reaction (15S)-hydroxy-(5Z,8Z,11Z,13E)-eicosatetraenoate + NAD(+) = 15-oxo-(5Z,8Z,11Z,13E)-eicosatetraenoate + NADH + H(+). The catalysed reaction is (11R)-hydroxy-(5Z,8Z,12E,14Z)-eicosatetraenoate + NAD(+) = 11-oxo-(5Z,8Z,12E,14Z)-eicosatetraenoate + NADH + H(+). It carries out the reaction lipoxin A4 + NAD(+) = 15-oxo-(5S,6R)-dihydroxy-(7E,9E,11Z,13E)-eicosatetraenoate + NADH + H(+). The enzyme catalyses 15-oxo-(5S,6R)-dihydroxy-(7E,9E,11Z)-eicosatrienoate + NADH + H(+) = (5S,6R,15S)-trihydroxy-(7E,9E,11Z)-eicosatrienoate + NAD(+). It catalyses the reaction prostaglandin A1 + NAD(+) = 15-oxo-prostaglandin A1 + NADH + H(+). The catalysed reaction is prostaglandin E1 + NAD(+) = 15-oxoprostaglandin E1 + NADH + H(+). It carries out the reaction 14-hydroxy-(4Z,7Z,10Z,12E,16Z,19Z)-docosahexaenoate + NAD(+) = 14-oxo-(4Z,7Z,10Z,12E,16Z,19Z)-docosahexaenoate + NADH + H(+). The enzyme catalyses resolvin E1 + NAD(+) = 18-oxo-resolvin E1 + NADH + H(+). It catalyses the reaction resolvin D1 + NAD(+) = 8-oxoresolvin D1 + NADH + H(+). The catalysed reaction is resolvin D1 + NAD(+) = 17-oxoresolvin D1 + NADH + H(+). It carries out the reaction resolvin D2 + NAD(+) = 7-oxoresolvin D2 + NADH + H(+). The enzyme catalyses resolvin D2 + NAD(+) = 16-oxoresolvin D2 + NADH + H(+). In terms of biological role, catalyzes the NAD-dependent dehydrogenation (oxidation) of a broad array of hydroxylated polyunsaturated fatty acids (mainly eicosanoids and docosanoids, including prostaglandins, lipoxins and resolvins), yielding their corresponding keto (oxo) metabolites. Decreases the levels of the pro-proliferative prostaglandins such as prostaglandin E2 (whose activity is increased in cancer because of an increase in the expression of cyclooxygenase 2) and generates oxo-fatty acid products that can profoundly influence cell function by abrogating pro-inflammatory cytokine expression. Converts resolvins E1, D1 and D2 to their oxo products, which represents a mode of resolvin inactivation. Resolvin E1 plays important roles during the resolution phase of acute inflammation, while resolvins D1 and D2 have a unique role in obesity-induced adipose inflammation. The polypeptide is 15-hydroxyprostaglandin dehydrogenase [NAD(+)] (Hpgd) (Rattus norvegicus (Rat)).